The chain runs to 274 residues: MQQLQNVIETAFERRADITPANVDTVTREAINHVIDLLDTGALRVAEKIDGQWVTHQWLKKAVLLSFRINDNQVMEGAETRYYDKVPMKFAGYDEARFQREGFRVVPPATVRKGAFIARNTVLMPSYVNIGAFVDEGTMVDTWATVGSCAQIGKNVHLSGGVGIGGVLEPLQANPTIIEDNCFVGARSEVVEGVIVEEGSVISMGVFIGQSTRIYDRETGEIHYGRVPAGSVVVSGNLPSKDGSYSLYCAVIVKKVDAKTRGKVGINELLRTID.

Residues Arg-104 and Asp-141 each contribute to the substrate site.

It belongs to the transferase hexapeptide repeat family. As to quaternary structure, homotrimer.

The protein resides in the cytoplasm. It catalyses the reaction (S)-2,3,4,5-tetrahydrodipicolinate + succinyl-CoA + H2O = (S)-2-succinylamino-6-oxoheptanedioate + CoA. The protein operates within amino-acid biosynthesis; L-lysine biosynthesis via DAP pathway; LL-2,6-diaminopimelate from (S)-tetrahydrodipicolinate (succinylase route): step 1/3. This is 2,3,4,5-tetrahydropyridine-2,6-dicarboxylate N-succinyltransferase from Yersinia enterocolitica serotype O:8 / biotype 1B (strain NCTC 13174 / 8081).